The chain runs to 246 residues: NH(3)-dependent NAD(+) synthetase (246 aa).

An ATP-binding site is contributed by 29 to 36; it reads GLSGGIDS. Asp35 lines the Mg(2+) pocket. Arg110 serves as a coordination point for deamido-NAD(+). Thr130 contacts ATP. Residue Glu135 coordinates Mg(2+). Positions 159 and 181 each coordinate ATP.

It belongs to the NAD synthetase family. As to quaternary structure, homodimer.

It catalyses the reaction deamido-NAD(+) + NH4(+) + ATP = AMP + diphosphate + NAD(+) + H(+). It functions in the pathway cofactor biosynthesis; NAD(+) biosynthesis; NAD(+) from deamido-NAD(+) (ammonia route): step 1/1. Catalyzes the ATP-dependent amidation of deamido-NAD to form NAD. Uses ammonia as a nitrogen source. The sequence is that of NH(3)-dependent NAD(+) synthetase from Campylobacter jejuni subsp. jejuni serotype O:2 (strain ATCC 700819 / NCTC 11168).